The chain runs to 476 residues: Arginine biosynthesis bifunctional protein ArgJ, mitochondrial (476 aa).

Substrate is bound by residues Thr204, Lys233, Thr244, Glu331, Asn471, and Thr476. The Nucleophile role is filled by Thr244.

This sequence belongs to the ArgJ family. In terms of assembly, heterodimer of an alpha and a beta chain. Post-translationally, the alpha and beta chains are autoproteolytically processed from a single precursor protein within the mitochondrion.

The protein localises to the mitochondrion matrix. The enzyme catalyses N(2)-acetyl-L-ornithine + L-glutamate = N-acetyl-L-glutamate + L-ornithine. It catalyses the reaction L-glutamate + acetyl-CoA = N-acetyl-L-glutamate + CoA + H(+). The protein operates within amino-acid biosynthesis; L-arginine biosynthesis; L-ornithine and N-acetyl-L-glutamate from L-glutamate and N(2)-acetyl-L-ornithine (cyclic): step 1/1. It participates in amino-acid biosynthesis; L-arginine biosynthesis; N(2)-acetyl-L-ornithine from L-glutamate: step 1/4. Functionally, catalyzes two activities which are involved in the cyclic version of arginine biosynthesis: the synthesis of acetylglutamate from glutamate and acetyl-CoA, and of ornithine by transacetylation between acetylornithine and glutamate. In Arthroderma otae (strain ATCC MYA-4605 / CBS 113480) (Microsporum canis), this protein is Arginine biosynthesis bifunctional protein ArgJ, mitochondrial.